A 480-amino-acid polypeptide reads, in one-letter code: ATP synthase subunit beta (480 aa).

Residue 154 to 161 (GGAGVGKT) coordinates ATP.

It belongs to the ATPase alpha/beta chains family. As to quaternary structure, F-type ATPases have 2 components, CF(1) - the catalytic core - and CF(0) - the membrane proton channel. CF(1) has five subunits: alpha(3), beta(3), gamma(1), delta(1), epsilon(1). CF(0) has four main subunits: a(1), b(1), b'(1) and c(9-12).

The protein resides in the cell inner membrane. The catalysed reaction is ATP + H2O + 4 H(+)(in) = ADP + phosphate + 5 H(+)(out). Produces ATP from ADP in the presence of a proton gradient across the membrane. The catalytic sites are hosted primarily by the beta subunits. The polypeptide is ATP synthase subunit beta (Bradyrhizobium sp. (strain ORS 278)).